The following is a 310-amino-acid chain: tRNA-dihydrouridine(16) synthase (310 aa).

Residues 7–9 (PMQ) and Gln68 contribute to the FMN site. Cys98 functions as the Proton donor in the catalytic mechanism. FMN contacts are provided by residues Lys139, 200-202 (NGE), and 224-225 (GR).

Belongs to the Dus family. DusC subfamily. It depends on FMN as a cofactor.

The enzyme catalyses 5,6-dihydrouridine(16) in tRNA + NADP(+) = uridine(16) in tRNA + NADPH + H(+). The catalysed reaction is 5,6-dihydrouridine(16) in tRNA + NAD(+) = uridine(16) in tRNA + NADH + H(+). Its function is as follows. Catalyzes the synthesis of 5,6-dihydrouridine (D), a modified base found in the D-loop of most tRNAs, via the reduction of the C5-C6 double bond in target uridines. Specifically modifies U16 in tRNAs. The protein is tRNA-dihydrouridine(16) synthase of Haemophilus influenzae (strain ATCC 51907 / DSM 11121 / KW20 / Rd).